The primary structure comprises 517 residues: UDP-N-acetylmuramoyl-tripeptide--D-alanyl-D-alanine ligase (517 aa).

Gly-138–Ser-144 contributes to the ATP binding site.

It belongs to the MurCDEF family. MurF subfamily.

The protein localises to the cytoplasm. The enzyme catalyses D-alanyl-D-alanine + UDP-N-acetyl-alpha-D-muramoyl-L-alanyl-gamma-D-glutamyl-meso-2,6-diaminopimelate + ATP = UDP-N-acetyl-alpha-D-muramoyl-L-alanyl-gamma-D-glutamyl-meso-2,6-diaminopimeloyl-D-alanyl-D-alanine + ADP + phosphate + H(+). It functions in the pathway cell wall biogenesis; peptidoglycan biosynthesis. Functionally, involved in cell wall formation. Catalyzes the final step in the synthesis of UDP-N-acetylmuramoyl-pentapeptide, the precursor of murein. The protein is UDP-N-acetylmuramoyl-tripeptide--D-alanyl-D-alanine ligase of Mycobacterium leprae (strain TN).